Here is a 428-residue protein sequence, read N- to C-terminus: UPF0229 protein YeaH (428 aa).

The segment covering 78 to 90 (GNDHFIQNDRIER) has biased composition (basic and acidic residues). Residues 78-111 (GNDHFIQNDRIERPQGGGGGGSGSGQGQASQDGE) form a disordered region. The span at 92–103 (QGGGGGGSGSGQ) shows a compositional bias: gly residues.

Belongs to the UPF0229 family.

The chain is UPF0229 protein YeaH from Salmonella choleraesuis (strain SC-B67).